The chain runs to 526 residues: Organic cation/carnitine transporter 4 (526 aa).

The Cytoplasmic segment spans residues 1 to 52 (MESPEDRNGNDVRQPLLEKIPVKKEAEGEERLCIDEMLQRYCGEFGRWQLKH). The helical transmembrane segment at 53–73 (FVLTCIAWALEAFHTMVMIFA) threads the bilayer. Residues 74–123 (DQEPEWRCVGSDCRVGSLNCELDPSSWEWTAGKGSSTVSEWGLICGDKYK) lie on the Extracellular side of the membrane. Residues 124–144 (VGLVQALFFAGCMIGAGVFGH) form a helical membrane-spanning segment. Residues 145–153 (LSDSKLGRK) are Cytoplasmic-facing. The chain crosses the membrane as a helical span at residues 154–174 (GSLTVVCIINAIFGIATAFSP). The Extracellular segment spans residues 175 to 179 (NYWTY). The chain crosses the membrane as a helical span at residues 180-200 (VVLRFLTGFSTGGVGLTAFVL). 201–208 (ATEPIGPS) serves as a coordination point for ATP. The Cytoplasmic portion of the chain corresponds to 201 to 214 (ATEPIGPSKRGVAG). Residues 215–235 (MSTFYFFSAGIAVLSGIAYVF) form a helical membrane-spanning segment. The Extracellular segment spans residues 236–240 (RSWRE). Residues 241-261 (LFIVSSLPSLLFLLIVIPFIS) traverse the membrane as a helical segment. The Cytoplasmic portion of the chain corresponds to 262-331 (ESPRWYLVRG…ILSPLMRMRL (70 aa)). A helical transmembrane segment spans residues 332-352 (VISVAISFTVSIVYYGLSLNV). The Extracellular segment spans residues 353–360 (GNLKTNLY). The chain crosses the membrane as a helical span at residues 361 to 381 (LNVFVNAVSEMPAFAITAVLL). At 382-390 (DKYGRKPLS) the chain is on the cytoplasmic side. A helical transmembrane segment spans residues 391-411 (IGTQWFSCVFCLVGFSVWGAG). The Extracellular segment spans residues 412–418 (PWKSVRM). Residues 419–439 (VSGVLGIFGMAGTYNLLFIYI) form a helical membrane-spanning segment. At 440 to 451 (AELFPTVVRNAA) the chain is on the cytoplasmic side. A helical transmembrane segment spans residues 452–472 (LGCATQAAQMGAILAPFVVVL). At 473–475 (GEE) the chain is on the extracellular side. A helical transmembrane segment spans residues 476-496 (LPFGVFAVCGLVGGGLAFYLP). Over 497–526 (ETLNKPLYDTMFGMHEAESESNRERGEVIC) the chain is Cytoplasmic.

Belongs to the major facilitator (TC 2.A.1) superfamily. Organic cation transporter (TC 2.A.1.19) family. In terms of tissue distribution, mostly expressed in siliques, and, to a lower extent, in stems, leaves, flowers and siliques. Present in pollen. In the stems of secondary inflorescences present in the phloem cells and xylem parenchyma cells.

The protein resides in the vacuole membrane. In terms of biological role, high affinity carnitine transporter involved in the active cellular uptake of carnitine. Also transports organic cations. The sequence is that of Organic cation/carnitine transporter 4 (OCT4) from Arabidopsis thaliana (Mouse-ear cress).